A 393-amino-acid polypeptide reads, in one-letter code: Lipoyl synthase, mitochondrial (393 aa).

Positions 111, 116, 122, 142, 146, 149, and 357 each coordinate [4Fe-4S] cluster. One can recognise a Radical SAM core domain in the interval 127–346 (EHGTQTATIM…ETRGNELGFL (220 aa)).

The protein belongs to the radical SAM superfamily. Lipoyl synthase family. It depends on [4Fe-4S] cluster as a cofactor.

It localises to the mitochondrion. The catalysed reaction is [[Fe-S] cluster scaffold protein carrying a second [4Fe-4S](2+) cluster] + N(6)-octanoyl-L-lysyl-[protein] + 2 oxidized [2Fe-2S]-[ferredoxin] + 2 S-adenosyl-L-methionine + 4 H(+) = [[Fe-S] cluster scaffold protein] + N(6)-[(R)-dihydrolipoyl]-L-lysyl-[protein] + 4 Fe(3+) + 2 hydrogen sulfide + 2 5'-deoxyadenosine + 2 L-methionine + 2 reduced [2Fe-2S]-[ferredoxin]. It participates in protein modification; protein lipoylation via endogenous pathway; protein N(6)-(lipoyl)lysine from octanoyl-[acyl-carrier-protein]: step 2/2. Catalyzes the radical-mediated insertion of two sulfur atoms into the C-6 and C-8 positions of the octanoyl moiety bound to the lipoyl domains of lipoate-dependent enzymes, thereby converting the octanoylated domains into lipoylated derivatives. The polypeptide is Lipoyl synthase, mitochondrial (Aedes aegypti (Yellowfever mosquito)).